We begin with the raw amino-acid sequence, 229 residues long: Clathrin light chain B (229 aa).

Low complexity-rich tracts occupy residues 1 to 17 (MAEDFGFFSSSESGAPE) and 45 to 58 (GAPAASQVASAQPG). The interval 1-80 (MAEDFGFFSS…TVNGDVFQEA (80 aa)) is disordered. 2 positions are modified to phosphoserine: serine 11 and serine 13. The involved in binding clathrin heavy chain stretch occupies residues 93-155 (ADRLTQEPES…QVEKNKINNR (63 aa)). Position 187 is a phosphothreonine (threonine 187). Cysteine 199 and cysteine 209 are disulfide-bonded. Lysine 204 is subject to N6-acetyllysine. Position 217 is a phosphoserine (serine 217).

This sequence belongs to the clathrin light chain family. In terms of assembly, clathrin coats are formed from molecules containing 3 heavy chains and 3 light chains. Interacts (via N-terminus) with HIP1. Interacts with HIP1R.

The protein localises to the cytoplasmic vesicle membrane. The protein resides in the membrane. It is found in the coated pit. Functionally, clathrin is the major protein of the polyhedral coat of coated pits and vesicles. This Rattus norvegicus (Rat) protein is Clathrin light chain B (Cltb).